Here is a 457-residue protein sequence, read N- to C-terminus: Acetylcholine receptor subunit alpha (457 aa).

The first 20 residues, 1–20 (MELTAVLLLLGLCSAGTVLG), serve as a signal peptide directing secretion. At 21–230 (SEHETRLVAK…ITYHFVMQRL (210 aa)) the chain is on the extracellular side. Cystine bridges form between C148/C162 and C212/C213. N161 carries N-linked (GlcNAc...) asparagine glycosylation. A run of 3 helical transmembrane segments spans residues 231–255 (PLYF…VFYL), 263–281 (MTLS…LVIV), and 297–316 (YMLF…VIVI). The Cytoplasmic portion of the chain corresponds to 317–428 (NTHHRSPSTH…WKYVAMVMDH (112 aa)). A helical transmembrane segment spans residues 429-447 (ILLGVFMLVCLIGTLAVFA).

Belongs to the ligand-gated ion channel (TC 1.A.9) family. Acetylcholine receptor (TC 1.A.9.1) subfamily. Alpha-1/CHRNA1 sub-subfamily. In terms of assembly, one of the alpha chains that assemble within the acetylcholine receptor, a pentamer of two alpha chains, a beta, a delta, and a gamma (in immature muscle) or epsilon (in mature muscle) chains. The muscle heteropentamer composed of alpha-1, beta-1, delta, epsilon subunits interacts with the alpha-conotoxin ImII.

The protein resides in the postsynaptic cell membrane. It is found in the cell membrane. It catalyses the reaction K(+)(in) = K(+)(out). It carries out the reaction Na(+)(in) = Na(+)(out). Its function is as follows. Upon acetylcholine binding, the AChR responds by an extensive change in conformation that affects all subunits and leads to opening of an ion-conducting channel across the plasma membrane. This is Acetylcholine receptor subunit alpha (Chrna1) from Rattus norvegicus (Rat).